Here is a 485-residue protein sequence, read N- to C-terminus: Cytoplasmic tRNA 2-thiolation protein 2 (485 aa).

The protein belongs to the CTU2/NCS2 family.

It is found in the cytoplasm. Its pathway is tRNA modification; 5-methoxycarbonylmethyl-2-thiouridine-tRNA biosynthesis. Functionally, plays a central role in 2-thiolation of mcm(5)S(2)U at tRNA wobble positions of tRNA(Lys), tRNA(Glu) and tRNA(Gln). May act by forming a heterodimer with NCS6 that ligates sulfur from thiocarboxylated URM1 onto the uridine of tRNAs at wobble position. Prior mcm(5) tRNA modification by the elongator complex is required for 2-thiolation. May also be involved in protein urmylation. This Vanderwaltozyma polyspora (strain ATCC 22028 / DSM 70294 / BCRC 21397 / CBS 2163 / NBRC 10782 / NRRL Y-8283 / UCD 57-17) (Kluyveromyces polysporus) protein is Cytoplasmic tRNA 2-thiolation protein 2.